The primary structure comprises 56 residues: Large ribosomal subunit protein bL33B (56 aa).

This sequence belongs to the bacterial ribosomal protein bL33 family.

The protein is Large ribosomal subunit protein bL33B of Cutibacterium acnes (strain DSM 16379 / KPA171202) (Propionibacterium acnes).